The sequence spans 608 residues: 1-deoxy-D-xylulose-5-phosphate synthase (608 aa).

Residues histidine 66 and 107–109 (GHA) contribute to the thiamine diphosphate site. Aspartate 138 contacts Mg(2+). Thiamine diphosphate contacts are provided by residues 139-140 (GA), asparagine 167, phenylalanine 277, and glutamate 350. Asparagine 167 serves as a coordination point for Mg(2+).

It belongs to the transketolase family. DXPS subfamily. As to quaternary structure, homodimer. Mg(2+) serves as cofactor. Requires thiamine diphosphate as cofactor.

The enzyme catalyses D-glyceraldehyde 3-phosphate + pyruvate + H(+) = 1-deoxy-D-xylulose 5-phosphate + CO2. It participates in metabolic intermediate biosynthesis; 1-deoxy-D-xylulose 5-phosphate biosynthesis; 1-deoxy-D-xylulose 5-phosphate from D-glyceraldehyde 3-phosphate and pyruvate: step 1/1. Catalyzes the acyloin condensation reaction between C atoms 2 and 3 of pyruvate and glyceraldehyde 3-phosphate to yield 1-deoxy-D-xylulose-5-phosphate (DXP). In Thermotoga maritima (strain ATCC 43589 / DSM 3109 / JCM 10099 / NBRC 100826 / MSB8), this protein is 1-deoxy-D-xylulose-5-phosphate synthase.